We begin with the raw amino-acid sequence, 120 residues long: Large ribosomal subunit protein uL18 (120 aa).

The tract at residues 1–22 is disordered; the sequence is MKLTRRESKNRRHRRVRGKVVG. Residues 8–18 show a composition bias toward basic residues; sequence SKNRRHRRVRG.

The protein belongs to the universal ribosomal protein uL18 family. As to quaternary structure, part of the 50S ribosomal subunit; part of the 5S rRNA/L5/L18/L25 subcomplex. Contacts the 5S and 23S rRNAs.

This is one of the proteins that bind and probably mediate the attachment of the 5S RNA into the large ribosomal subunit, where it forms part of the central protuberance. This chain is Large ribosomal subunit protein uL18, found in Nostoc punctiforme (strain ATCC 29133 / PCC 73102).